A 78-amino-acid chain; its full sequence is Acyl carrier protein (78 aa).

The Carrier domain maps to 1–76; the sequence is MALFEDIQAV…DVVKYIEDNK (76 aa). O-(pantetheine 4'-phosphoryl)serine is present on S36.

It belongs to the acyl carrier protein (ACP) family. Post-translationally, 4'-phosphopantetheine is transferred from CoA to a specific serine of apo-ACP by AcpS. This modification is essential for activity because fatty acids are bound in thioester linkage to the sulfhydryl of the prosthetic group.

It localises to the cytoplasm. It participates in lipid metabolism; fatty acid biosynthesis. Carrier of the growing fatty acid chain in fatty acid biosynthesis. This chain is Acyl carrier protein, found in Helicobacter pylori (strain J99 / ATCC 700824) (Campylobacter pylori J99).